The primary structure comprises 426 residues: Glutamyl-tRNA reductase (426 aa).

Residues 52–55, S110, 115–117, and Q121 each bind substrate; these read TCNR and EYE. C53 functions as the Nucleophile in the catalytic mechanism. An NADP(+)-binding site is contributed by 190 to 195; that stretch reads GAGEMA.

It belongs to the glutamyl-tRNA reductase family. Homodimer.

It carries out the reaction (S)-4-amino-5-oxopentanoate + tRNA(Glu) + NADP(+) = L-glutamyl-tRNA(Glu) + NADPH + H(+). It functions in the pathway porphyrin-containing compound metabolism; protoporphyrin-IX biosynthesis; 5-aminolevulinate from L-glutamyl-tRNA(Glu): step 1/2. In terms of biological role, catalyzes the NADPH-dependent reduction of glutamyl-tRNA(Glu) to glutamate 1-semialdehyde (GSA). The protein is Glutamyl-tRNA reductase of Saccharolobus solfataricus (strain ATCC 35092 / DSM 1617 / JCM 11322 / P2) (Sulfolobus solfataricus).